A 488-amino-acid chain; its full sequence is Protein nucleotidyltransferase YdiU (488 aa).

ATP is bound by residues glycine 91, glycine 93, arginine 94, lysine 114, aspartate 126, glycine 127, arginine 177, and arginine 184. Residue aspartate 253 is the Proton acceptor of the active site. Residues asparagine 254 and aspartate 263 each coordinate Mg(2+). ATP is bound at residue aspartate 263.

It belongs to the SELO family. Requires Mg(2+) as cofactor. The cofactor is Mn(2+).

The enzyme catalyses L-seryl-[protein] + ATP = 3-O-(5'-adenylyl)-L-seryl-[protein] + diphosphate. It carries out the reaction L-threonyl-[protein] + ATP = 3-O-(5'-adenylyl)-L-threonyl-[protein] + diphosphate. It catalyses the reaction L-tyrosyl-[protein] + ATP = O-(5'-adenylyl)-L-tyrosyl-[protein] + diphosphate. The catalysed reaction is L-histidyl-[protein] + UTP = N(tele)-(5'-uridylyl)-L-histidyl-[protein] + diphosphate. The enzyme catalyses L-seryl-[protein] + UTP = O-(5'-uridylyl)-L-seryl-[protein] + diphosphate. It carries out the reaction L-tyrosyl-[protein] + UTP = O-(5'-uridylyl)-L-tyrosyl-[protein] + diphosphate. Nucleotidyltransferase involved in the post-translational modification of proteins. It can catalyze the addition of adenosine monophosphate (AMP) or uridine monophosphate (UMP) to a protein, resulting in modifications known as AMPylation and UMPylation. This Bacillus mycoides (strain KBAB4) (Bacillus weihenstephanensis) protein is Protein nucleotidyltransferase YdiU.